Reading from the N-terminus, the 832-residue chain is MAFSRIALLCQRFSRQQQQRQLLHRPLTTKLDNTRFLHPNQSKLAQNLIVIFTRQPFSPDDPELLILSPELNTKVVETVLNGFKRWGLAYLFFNWASKQEGYRNDMYAYNAMASILSRARQNASLKALVVDVLNSRCFMSPGAFGFFIRCLGNAGLVDEASSVFDRVREMGLCVPNAYTYNCLLEAISKSNSSSVELVEARLKEMRDCGFHFDKFTLTPVLQVYCNTGKSERALSVFNEILSRGWLDEHISTILVVSFCKWGQVDKAFELIEMLEERDIRLNYKTYCVLIHGFVKESRIDKAFQLFEKMRRMGMNADIALYDVLIGGLCKHKDLEMALSLYLEIKRSGIPPDRGILGKLLCSFSEESELSRITEVIIGDIDKKSVMLLYKSLFEGFIRNDLVHEAYSFIQNLMGNYESDGVSEIVKLLKDHNKAILPDSDSLSIVINCLVKANKVDMAVTLLHDIVQNGLIPGPMMYNNIIEGMCKEGRSEESLKLLGEMKDAGVEPSQFTLNCIYGCLAERCDFVGALDLLKKMRFYGFEPWIKHTTFLVKKLCENGRAVDACKYLDDVAGEGFLGHMVASTAAIDGLIKNEGVDRGLELFRDICANGHCPDVIAYHVLIKALCKACRTMEADILFNEMVSKGLKPTVATYNSMIDGWCKEGEIDRGLSCIVRMYEDEKNPDVITYTSLIHGLCASGRPSEAIFRWNEMKGKDCYPNRITFMALIQGLCKCGWSGEALVYFREMEEKEMEPDSAVYLSLVSSFLSSENINAGFGIFREMVHKGRFPVSVDRNYMLAVNVTSKFVEDLRTSCYLTCLIKDGRIPILAVVSRI.

The transit peptide at 1–27 directs the protein to the mitochondrion; sequence MAFSRIALLCQRFSRQQQQRQLLHRPL. PPR repeat units lie at residues 105–139, 140–174, 176–212, 213–247, 252–281, 282–316, 317–351, 352–383, 385–415, 438–472, 473–507, 508–542, 543–577, 578–612, 613–647, 648–682, 683–717, 718–752, and 753–787; these read DMYAYNAMASILSRARQNASLKALVVDVLNSRCFM, SPGAFGFFIRCLGNAGLVDEASSVFDRVREMGLCV, NAYTYNCLLEAISKSNSSSVELVEARLKEMRDCGFHF, DKFTLTPVLQVYCNTGKSERALSVFNEILSRGWLD, TILVVSFCKWGQVDKAFELIEMLEERDIRL, NYKTYCVLIHGFVKESRIDKAFQLFEKMRRMGMNA, DIALYDVLIGGLCKHKDLEMALSLYLEIKRSGIPP, DRGILGKLLCSFSEESELSRITEVIIGDIDKK, VMLLYKSLFEGFIRNDLVHEAYSFIQNLMGN, DSDSLSIVINCLVKANKVDMAVTLLHDIVQNGLIP, GPMMYNNIIEGMCKEGRSEESLKLLGEMKDAGVEP, SQFTLNCIYGCLAERCDFVGALDLLKKMRFYGFEP, WIKHTTFLVKKLCENGRAVDACKYLDDVAGEGFLG, HMVASTAAIDGLIKNEGVDRGLELFRDICANGHCP, DVIAYHVLIKALCKACRTMEADILFNEMVSKGLKP, TVATYNSMIDGWCKEGEIDRGLSCIVRMYEDEKNP, DVITYTSLIHGLCASGRPSEAIFRWNEMKGKDCYP, NRITFMALIQGLCKCGWSGEALVYFREMEEKEMEP, and DSAVYLSLVSSFLSSENINAGFGIFREMVHKGRFP.

It belongs to the PPR family. P subfamily.

It is found in the mitochondrion. The chain is Putative pentatricopeptide repeat-containing protein At5g08310, mitochondrial from Arabidopsis thaliana (Mouse-ear cress).